We begin with the raw amino-acid sequence, 51 residues long: ATP synthase F(1) complex subunit epsilon, mitochondrial (51 aa).

Residues Lys-21, Lys-32, and Lys-37 each carry the N6-acetyllysine; alternate modification. Lys-21, Lys-32, and Lys-37 each carry N6-succinyllysine; alternate. N6-acetyllysine is present on Lys-44.

This sequence belongs to the eukaryotic ATPase epsilon family. In terms of assembly, component of the ATP synthase complex composed at least of ATP5F1A/subunit alpha, ATP5F1B/subunit beta, ATP5MC1/subunit c (homooctomer), MT-ATP6/subunit a, MT-ATP8/subunit 8, ATP5ME/subunit e, ATP5MF/subunit f, ATP5MG/subunit g, ATP5MK/subunit k, ATP5MJ/subunit j, ATP5F1C/subunit gamma, ATP5F1D/subunit delta, ATP5F1E/subunit epsilon, ATP5PF/subunit F6, ATP5PB/subunit b, ATP5PD/subunit d, ATP5PO/subunit OSCP. ATP synthase complex consists of a soluble F(1) head domain (subunits alpha(3) and beta(3)) - the catalytic core - and a membrane F(0) domain - the membrane proton channel (subunits c, a, 8, e, f, g, k and j). These two domains are linked by a central stalk (subunits gamma, delta, and epsilon) rotating inside the F1 region and a stationary peripheral stalk (subunits F6, b, d, and OSCP). In terms of tissue distribution, ubiquitous.

The protein localises to the mitochondrion. Its subcellular location is the mitochondrion inner membrane. Functionally, subunit epsilon, of the mitochondrial membrane ATP synthase complex (F(1)F(0) ATP synthase or Complex V) that produces ATP from ADP in the presence of a proton gradient across the membrane which is generated by electron transport complexes of the respiratory chain. ATP synthase complex consist of a soluble F(1) head domain - the catalytic core - and a membrane F(1) domain - the membrane proton channel. These two domains are linked by a central stalk rotating inside the F(1) region and a stationary peripheral stalk. During catalysis, ATP synthesis in the catalytic domain of F(1) is coupled via a rotary mechanism of the central stalk subunits to proton translocation. In vivo, can only synthesize ATP although its ATP hydrolase activity can be activated artificially in vitro. May be essential for the assembly of F(1) and may play an important role in the incorporation of the hydrophobic subunit c into the F(1)-c oligomer rotor of the mitochondrial ATP synthase complex. This chain is ATP synthase F(1) complex subunit epsilon, mitochondrial, found in Homo sapiens (Human).